The chain runs to 962 residues: DNA primase (962 aa).

Residues 894–932 (CLRARHARSPPARTFVALSVDAHDRLCISLSQQCFATKC) form a CHC2-type zinc finger.

Belongs to the herpesviridae DNA primase family. In terms of assembly, associates with the helicase and the primase-associated factor to form the helicase-primase factor.

It localises to the host nucleus. Functionally, essential component of the helicase/primase complex. Unwinds the DNA at the replication forks and generates single-stranded DNA for both leading and lagging strand synthesis. The primase initiates primer synthesis and thereby produces large amount of short RNA primers on the lagging strand that the polymerase elongates using dNTPs. The sequence is that of DNA primase (UL52) from Sus scrofa (Pig).